The primary structure comprises 243 residues: MEVSTSSMSSKPEQMQNPPPMISSPRFQPQIISPHHHDQHQHLSNPYPTTFVQADTSTFKQVVQMLTGSSTDTTTGKHHEAPSPVNNNNKGSSFSIPPIKKTNSFKLYERRQNNNNMFAKNDLMINTLRLQNSQRLMFTGGNSSHHQSPRFSPRNSSSSENILLSPSMLDFPKLGLNSPVTPLRSNDDPFNKSSPLSLGNSSEEDKAIADKGFYLHPSPVSTPRDSQPLLLPLFPVASPARNS.

Residues 1-16 (MEVSTSSMSSKPEQMQ) are compositionally biased toward polar residues. A disordered region spans residues 1 to 49 (MEVSTSSMSSKPEQMQNPPPMISSPRFQPQIISPHHHDQHQHLSNPYPT). The VQ motif lies at 59–68 (FKQVVQMLTG). Disordered regions lie at residues 69-98 (SSTD…SIPP) and 138-162 (FTGG…SENI). 2 positions are modified to phosphoserine: Ser-83 and Ser-95. Polar residues predominate over residues 84–98 (PVNNNNKGSSFSIPP). Thr-139 is modified (phosphothreonine). 5 positions are modified to phosphoserine: Ser-148, Ser-152, Ser-165, Ser-167, and Ser-178. The span at 149-162 (PRFSPRNSSSSENI) shows a compositional bias: low complexity. A disordered region spans residues 180-243 (VTPLRSNDDP…FPVASPARNS (64 aa)). Thr-181 bears the Phosphothreonine mark. A compositionally biased stretch (polar residues) spans 191–201 (NKSSPLSLGNS). 2 positions are modified to phosphoserine: Ser-218 and Ser-221. Thr-222 carries the post-translational modification Phosphothreonine. Residue Ser-238 is modified to Phosphoserine.

Phosphorylated on serine and threonine residues by MPK6.

It localises to the nucleus. Functionally, may modulate WRKY transcription factor activities. The sequence is that of VQ motif-containing protein 33 from Arabidopsis thaliana (Mouse-ear cress).